The primary structure comprises 58 residues: Small ribosomal subunit protein bS21 (58 aa).

The segment at 30–58 (SEVRKREHYEKPSVKRKKKSEAARKRKFK) is disordered. Residues 31–42 (EVRKREHYEKPS) are compositionally biased toward basic and acidic residues. Over residues 43–58 (VKRKKKSEAARKRKFK) the composition is skewed to basic residues.

The protein belongs to the bacterial ribosomal protein bS21 family.

This Clostridium perfringens (strain ATCC 13124 / DSM 756 / JCM 1290 / NCIMB 6125 / NCTC 8237 / Type A) protein is Small ribosomal subunit protein bS21.